Here is a 456-residue protein sequence, read N- to C-terminus: Argininosuccinate lyase (456 aa).

Belongs to the lyase 1 family. Argininosuccinate lyase subfamily.

It is found in the cytoplasm. It catalyses the reaction 2-(N(omega)-L-arginino)succinate = fumarate + L-arginine. The protein operates within amino-acid biosynthesis; L-arginine biosynthesis; L-arginine from L-ornithine and carbamoyl phosphate: step 3/3. The protein is Argininosuccinate lyase of Shewanella amazonensis (strain ATCC BAA-1098 / SB2B).